The chain runs to 322 residues: MRRSVFCGVGAFLPAKVITNDDLSLMVDTTDEWVFRRTGIKRRHVVEEGDTVSCMATEAAKIALEDAGVSATEVDLIIVATATPDKTMPSCATMVQGSLGCKNAAAFDINAACSGFLYALSIVDSMIKAGQANIALIIGSEAMSKVVDWTDRSTCVLFGDGAGAFVFKGQDETEKPGAGVMSTLLCADGSLGNVLYTNGGVASTGKAGYICMKGTVLFEHAVVKLSSAISALLESSALDVDSIDWFIPHQANVRIIDLVINRLGLSRDKVILSIDEHANTSSASIPLAMYEAKRAGRIKKGNLVLFAAIGAGITWGVSLLRL.

Residues Cys-113 and His-249 contribute to the active site. Positions 250–254 (QANVR) are ACP-binding. Asn-279 is an active-site residue.

This sequence belongs to the thiolase-like superfamily. FabH family. In terms of assembly, homodimer.

It is found in the cytoplasm. The enzyme catalyses malonyl-[ACP] + acetyl-CoA + H(+) = 3-oxobutanoyl-[ACP] + CO2 + CoA. Its pathway is lipid metabolism; fatty acid biosynthesis. Catalyzes the condensation reaction of fatty acid synthesis by the addition to an acyl acceptor of two carbons from malonyl-ACP. Catalyzes the first condensation reaction which initiates fatty acid synthesis and may therefore play a role in governing the total rate of fatty acid production. Possesses both acetoacetyl-ACP synthase and acetyl transacylase activities. Its substrate specificity determines the biosynthesis of branched-chain and/or straight-chain of fatty acids. The chain is Beta-ketoacyl-[acyl-carrier-protein] synthase III from Anaplasma marginale (strain St. Maries).